A 159-amino-acid polypeptide reads, in one-letter code: uncharacterized protein (159 aa).

This sequence belongs to the IIV-6 136R family.

This is an uncharacterized protein from Invertebrate iridescent virus 3 (IIV-3).